The primary structure comprises 448 residues: tRNA(Ile)-lysidine synthase (448 aa).

25 to 30 provides a ligand contact to ATP; it reads SGGSDS.

This sequence belongs to the tRNA(Ile)-lysidine synthase family.

The protein localises to the cytoplasm. It carries out the reaction cytidine(34) in tRNA(Ile2) + L-lysine + ATP = lysidine(34) in tRNA(Ile2) + AMP + diphosphate + H(+). In terms of biological role, ligates lysine onto the cytidine present at position 34 of the AUA codon-specific tRNA(Ile) that contains the anticodon CAU, in an ATP-dependent manner. Cytidine is converted to lysidine, thus changing the amino acid specificity of the tRNA from methionine to isoleucine. The protein is tRNA(Ile)-lysidine synthase of Brucella melitensis biotype 2 (strain ATCC 23457).